The following is a 144-amino-acid chain: Maximins 11/H11 (144 aa).

The first 18 residues, M1–A18, serve as a signal peptide directing secretion. Residues R19 to R43 constitute a propeptide that is removed on maturation. N70 is modified (asparagine amide). The propeptide occupies T74–R123. Position 143 is an isoleucine amide (I143).

It belongs to the bombinin family. As to expression, expressed by the skin glands.

The protein localises to the secreted. Maximin-11 shows antimicrobial activity against bacteria and against the fungus C.albicans. It has little hemolytic activity. In terms of biological role, maximin-H11 shows antimicrobial activity against bacteria and against the fungus C.albicans. Shows strong hemolytic activity. This Bombina maxima (Giant fire-bellied toad) protein is Maximins 11/H11.